The following is a 353-amino-acid chain: Methionine import ATP-binding protein MetN (353 aa).

Positions 6-249 constitute an ABC transporter domain; it reads LKNVDVDFPQ…PKQELTKKFV (244 aa). 41–48 contributes to the ATP binding site; that stretch reads GFSGAGKS.

Belongs to the ABC transporter superfamily. Methionine importer (TC 3.A.1.24) family. The complex is composed of two ATP-binding proteins (MetN), two transmembrane proteins (MetI) and a solute-binding protein (MetQ).

Its subcellular location is the cell membrane. The enzyme catalyses L-methionine(out) + ATP + H2O = L-methionine(in) + ADP + phosphate + H(+). It catalyses the reaction D-methionine(out) + ATP + H2O = D-methionine(in) + ADP + phosphate + H(+). In terms of biological role, part of the ABC transporter complex MetNIQ involved in methionine import. Responsible for energy coupling to the transport system. This is Methionine import ATP-binding protein MetN from Lactobacillus acidophilus (strain ATCC 700396 / NCK56 / N2 / NCFM).